An 892-amino-acid polypeptide reads, in one-letter code: Alanine--tRNA ligase (892 aa).

The Zn(2+) site is built by His596, His600, Cys700, and His704.

This sequence belongs to the class-II aminoacyl-tRNA synthetase family. Zn(2+) serves as cofactor.

The protein localises to the cytoplasm. The enzyme catalyses tRNA(Ala) + L-alanine + ATP = L-alanyl-tRNA(Ala) + AMP + diphosphate. In terms of biological role, catalyzes the attachment of alanine to tRNA(Ala) in a two-step reaction: alanine is first activated by ATP to form Ala-AMP and then transferred to the acceptor end of tRNA(Ala). Also edits incorrectly charged Ser-tRNA(Ala) and Gly-tRNA(Ala) via its editing domain. The sequence is that of Alanine--tRNA ligase from Methanococcus maripaludis (strain C7 / ATCC BAA-1331).